We begin with the raw amino-acid sequence, 932 residues long: Isoleucine--tRNA ligase (932 aa).

A 'HIGH' region motif is present at residues Pro-59–His-69. Residue Glu-562 coordinates L-isoleucyl-5'-AMP. A 'KMSKS' region motif is present at residues Lys-603 to Ser-607. Lys-606 is a binding site for ATP. Zn(2+) contacts are provided by Cys-899, Cys-902, Cys-915, and Cys-918.

It belongs to the class-I aminoacyl-tRNA synthetase family. IleS type 1 subfamily. In terms of assembly, monomer. Zn(2+) is required as a cofactor.

The protein localises to the cytoplasm. The catalysed reaction is tRNA(Ile) + L-isoleucine + ATP = L-isoleucyl-tRNA(Ile) + AMP + diphosphate. Its function is as follows. Catalyzes the attachment of isoleucine to tRNA(Ile). As IleRS can inadvertently accommodate and process structurally similar amino acids such as valine, to avoid such errors it has two additional distinct tRNA(Ile)-dependent editing activities. One activity is designated as 'pretransfer' editing and involves the hydrolysis of activated Val-AMP. The other activity is designated 'posttransfer' editing and involves deacylation of mischarged Val-tRNA(Ile). The sequence is that of Isoleucine--tRNA ligase from Pasteurella multocida (strain Pm70).